Here is a 417-residue protein sequence, read N- to C-terminus: Mast cell carboxypeptidase A (417 aa).

Positions 1–15 (MRFFLLMAVIYTTLA) are cleaved as a signal peptide. The propeptide at 16–109 (IAPVHFDREK…IEKQFDVKDE (94 aa)) is activation peptide. Residues 118-412 (KYNDWDKIVS…LSVKFIAKYI (295 aa)) form the Peptidase M14 domain. Cystine bridges form between Cys173/Cys186 and Cys245/Cys268. Positions 176 and 179 each coordinate Zn(2+). Zn(2+) is bound at residue His304. The active-site Proton donor/acceptor is the Glu378.

This sequence belongs to the peptidase M14 family. Zn(2+) is required as a cofactor.

It localises to the cytoplasmic vesicle. It is found in the secretory vesicle. The enzyme catalyses Release of a C-terminal amino acid, but little or no action with -Asp, -Glu, -Arg, -Lys or -Pro.. The chain is Mast cell carboxypeptidase A (Cpa3) from Mus musculus (Mouse).